We begin with the raw amino-acid sequence, 107 residues long: Phosphoribosyl-ATP pyrophosphatase (107 aa).

The protein belongs to the PRA-PH family.

It is found in the cytoplasm. The catalysed reaction is 1-(5-phospho-beta-D-ribosyl)-ATP + H2O = 1-(5-phospho-beta-D-ribosyl)-5'-AMP + diphosphate + H(+). It participates in amino-acid biosynthesis; L-histidine biosynthesis; L-histidine from 5-phospho-alpha-D-ribose 1-diphosphate: step 2/9. In Clostridium tetani (strain Massachusetts / E88), this protein is Phosphoribosyl-ATP pyrophosphatase (hisE).